The primary structure comprises 227 residues: uncharacterized protein (227 aa).

4 helical membrane passes run 17–37 (VGIK…GVFS), 79–99 (GFLF…IISI), 112–132 (LMTP…LALI), and 181–201 (VAVF…ILVF).

It is found in the cell membrane. This is an uncharacterized protein from Escherichia coli (strain K12).